A 178-amino-acid chain; its full sequence is Thymidine kinase (178 aa).

13 to 20 (GPMFAGKS) is an ATP binding site. E85 acts as the Proton acceptor in catalysis. F115 lines the substrate pocket. C140 and C143 together coordinate Zn(2+). Position 159 to 163 (159 to 163 (IEIIG)) interacts with substrate. The Zn(2+) site is built by C172 and C175.

It belongs to the thymidine kinase family.

It catalyses the reaction thymidine + ATP = dTMP + ADP + H(+). This Myxoma virus (strain Lausanne) (MYXV) protein is Thymidine kinase (TK).